The primary structure comprises 95 residues: Integration host factor subunit beta (95 aa).

Belongs to the bacterial histone-like protein family. Heterodimer of an alpha and a beta chain.

Functionally, this protein is one of the two subunits of integration host factor, a specific DNA-binding protein that functions in genetic recombination as well as in transcriptional and translational control. The protein is Integration host factor subunit beta of Klebsiella pneumoniae (strain 342).